Consider the following 300-residue polypeptide: MWFKNLQIYRLPAPWAITAEQLETDLAPHAFLPCSSLDMQSQGWVSPRENGALVYTLNKQIMLLLGTEKKLLPTTVINQVTKIKAAEIEEQQGFKPGRKQMKELKEDVTDELLPRAFSIWRQTWVWIDPVNGWLVVDAGSPAKADEVIKLLIKSVDKLPLDTLHVVQSPVAAMTQWLLTDEAPSGFTVDQDTELRSTGEGKATVRYVRHTLEAEDVQRHIAAGKQCTRLAMSWADKISFVLTESLAIKRVAPLDVIKENTDTTAQNDDERFDSDVMLMTGELSRMLADLVQALGGEQAKK.

Belongs to the RdgC family.

It is found in the cytoplasm. It localises to the nucleoid. Its function is as follows. May be involved in recombination. This is Recombination-associated protein RdgC from Herminiimonas arsenicoxydans.